The sequence spans 347 residues: Ribosomal RNA small subunit methyltransferase C (347 aa).

Belongs to the methyltransferase superfamily. RsmC family. As to quaternary structure, monomer.

The protein resides in the cytoplasm. The catalysed reaction is guanosine(1207) in 16S rRNA + S-adenosyl-L-methionine = N(2)-methylguanosine(1207) in 16S rRNA + S-adenosyl-L-homocysteine + H(+). In terms of biological role, specifically methylates the guanine in position 1207 of 16S rRNA in the 30S particle. This Shewanella baltica (strain OS195) protein is Ribosomal RNA small subunit methyltransferase C.